A 365-amino-acid chain; its full sequence is 2-aminoethylphosphonate--pyruvate transaminase (365 aa).

Lys194 is modified (N6-(pyridoxal phosphate)lysine).

Belongs to the class-V pyridoxal-phosphate-dependent aminotransferase family. PhnW subfamily. Homodimer. The cofactor is pyridoxal 5'-phosphate.

It catalyses the reaction (2-aminoethyl)phosphonate + pyruvate = phosphonoacetaldehyde + L-alanine. Its function is as follows. Involved in phosphonate degradation. This Bacillus cereus (strain 03BB102) protein is 2-aminoethylphosphonate--pyruvate transaminase.